The chain runs to 494 residues: Guanosine-5'-triphosphate,3'-diphosphate pyrophosphatase (494 aa).

This sequence belongs to the GppA/Ppx family. GppA subfamily.

It carries out the reaction guanosine 3'-diphosphate 5'-triphosphate + H2O = guanosine 3',5'-bis(diphosphate) + phosphate + H(+). It functions in the pathway purine metabolism; ppGpp biosynthesis; ppGpp from GTP: step 2/2. Its function is as follows. Catalyzes the conversion of pppGpp to ppGpp. Guanosine pentaphosphate (pppGpp) is a cytoplasmic signaling molecule which together with ppGpp controls the 'stringent response', an adaptive process that allows bacteria to respond to amino acid starvation, resulting in the coordinated regulation of numerous cellular activities. This chain is Guanosine-5'-triphosphate,3'-diphosphate pyrophosphatase, found in Shigella dysenteriae serotype 1 (strain Sd197).